A 341-amino-acid chain; its full sequence is Phenylalanine--tRNA ligase alpha subunit (341 aa).

Glutamate 256 is a Mg(2+) binding site.

The protein belongs to the class-II aminoacyl-tRNA synthetase family. Phe-tRNA synthetase alpha subunit type 1 subfamily. As to quaternary structure, tetramer of two alpha and two beta subunits. It depends on Mg(2+) as a cofactor.

The protein localises to the cytoplasm. The enzyme catalyses tRNA(Phe) + L-phenylalanine + ATP = L-phenylalanyl-tRNA(Phe) + AMP + diphosphate + H(+). This Chlamydia caviae (strain ATCC VR-813 / DSM 19441 / 03DC25 / GPIC) (Chlamydophila caviae) protein is Phenylalanine--tRNA ligase alpha subunit.